Here is a 140-residue protein sequence, read N- to C-terminus: uncharacterized protein (140 aa).

This is an uncharacterized protein from Spirochaeta aurantia.